A 152-amino-acid chain; its full sequence is Protein Smg homolog (152 aa).

This sequence belongs to the Smg family.

The protein is Protein Smg homolog of Nitrosomonas eutropha (strain DSM 101675 / C91 / Nm57).